The following is a 110-amino-acid chain: UPF0122 protein SMU_1061 (110 aa).

This sequence belongs to the UPF0122 family.

Might take part in the signal recognition particle (SRP) pathway. This is inferred from the conservation of its genetic proximity to ftsY/ffh. May be a regulatory protein. This chain is UPF0122 protein SMU_1061 (ylxM), found in Streptococcus mutans serotype c (strain ATCC 700610 / UA159).